The sequence spans 1186 residues: Atrophin-1 (1186 aa).

Disordered regions lie at residues 1–604, 618–763, and 781–858; these read MKTR…PTVT, ASSP…ARFN, and VPLE…HRPP. The Nuclear localization signal motif lies at 16–32; that stretch reads RKKEAPGPREELRSRGR. The segment covering 17–29 has biased composition (basic and acidic residues); it reads KKEAPGPREELRS. Ser-34 is modified (phosphoserine). Residues 45-63 show a composition bias toward basic and acidic residues; it reads GKAEKSRQTAKKARVEEAS. Phosphoserine occurs at positions 77, 79, 100, 102, and 106. Over residues 107–127 the composition is skewed to basic and acidic residues; the sequence is LDGRSLNDDGSSDPRDIDQDN. The segment covering 128-151 has biased composition (polar residues); that stretch reads RSTSPSIYSPGSVENDSDSSSGLS. The segment covering 157-173 has biased composition (pro residues); the sequence is PYHPPPLFPPSPQPPDS. Composition is skewed to low complexity over residues 258–270, 349–365, and 375–396; these read PISV…SGAP, PTLA…SSSA, and SSSS…SSAS. Polar residues predominate over residues 416–437; it reads SLSVSNQPPKYTQPSLPSQAVW. A compositionally biased stretch (low complexity) spans 484 to 503; the sequence is QQQQQQQQQQQQQQQHHGNS. An involved in binding BAIAP2 region spans residues 513 to 563; it reads HPLEGGSSHHAHPYAMSPSLGSLRPYPPGPAHLPPPHSQVSYSQAGPNGPP. Positions 537 to 549 are enriched in pro residues; sequence PYPPGPAHLPPPH. Low complexity-rich tracts occupy residues 565-582 and 618-628; these read SSSS…YPCS and ASSPAGYKTAS. Ser-628 bears the Phosphoserine mark. Lys-637 is modified (N6-acetyllysine). Thr-649 is subject to Phosphothreonine. At Ser-657 the chain carries Phosphoserine. Position 665 is a phosphothreonine (Thr-665). Pro residues-rich tracts occupy residues 689–714 and 735–748; these read GPGP…PASG and SPVP…PPPK. Ser-735 carries the post-translational modification Phosphoserine; by MAPK8. Phosphoserine is present on residues Ser-742 and Ser-744. Over residues 791–835 the composition is skewed to basic and acidic residues; that stretch reads KRADLVEKVRREAEQRAREEKEREREREREKEREREKERELERSV. Residues 875–890 are required for interaction with FAT1; the sequence is DTPALRTLSEYARPHV. Residue Ser-892 is modified to Phosphoserine. The Nuclear export signal signature appears at 1029-1037; sequence ALGNDPLAR. Arg-1111 bears the Asymmetric dimethylarginine mark. Residue Lys-1179 forms a Glycyl lysine isopeptide (Lys-Gly) (interchain with G-Cter in SUMO2) linkage.

As to quaternary structure, interacts with NR2E1; the interaction represses the transcriptional activity of NR2E1. Interacts with BAIAP2, WWP1, WWP2, WWP3 and RERE. Interacts (via its N-terminus) with MTG8; the interaction enhances transcriptional repression of MTG8. Interacts with FAT1 (via a C-terminal domain). Interacts with PQBP1. Phosphorylated in vitro by MAPK8/JNK1 on Ser-735.

It localises to the nucleus. It is found in the cytoplasm. Its subcellular location is the perinuclear region. The protein localises to the cell junction. Transcriptional corepressor. Corepressor of MTG8 transcriptional repression. Recruits NR2E1 to repress transcription. Has some intrinsic repression activity. Promotes vascular smooth cell (VSMC) migration and orientation. The sequence is that of Atrophin-1 (ATN1) from Pan troglodytes (Chimpanzee).